Consider the following 348-residue polypeptide: Anthranilate phosphoribosyltransferase (348 aa).

Residues glycine 81, 84-85 (GD), 91-94 (NVST), 109-117 (KHGNRAVSG), and serine 121 each bind 5-phospho-alpha-D-ribose 1-diphosphate. Glycine 81 contacts anthranilate. Serine 93 is a Mg(2+) binding site. An anthranilate-binding site is contributed by asparagine 112. Arginine 167 is a binding site for anthranilate. Positions 226 and 227 each coordinate Mg(2+).

This sequence belongs to the anthranilate phosphoribosyltransferase family. Homodimer. Mg(2+) serves as cofactor.

The catalysed reaction is N-(5-phospho-beta-D-ribosyl)anthranilate + diphosphate = 5-phospho-alpha-D-ribose 1-diphosphate + anthranilate. The protein operates within amino-acid biosynthesis; L-tryptophan biosynthesis; L-tryptophan from chorismate: step 2/5. Its function is as follows. Catalyzes the transfer of the phosphoribosyl group of 5-phosphorylribose-1-pyrophosphate (PRPP) to anthranilate to yield N-(5'-phosphoribosyl)-anthranilate (PRA). This Stutzerimonas stutzeri (strain A1501) (Pseudomonas stutzeri) protein is Anthranilate phosphoribosyltransferase.